The primary structure comprises 256 residues: Ribosomal RNA small subunit methyltransferase A (256 aa).

S-adenosyl-L-methionine contacts are provided by histidine 12, leucine 14, glycine 39, glutamate 60, aspartate 83, and asparagine 101.

Belongs to the class I-like SAM-binding methyltransferase superfamily. rRNA adenine N(6)-methyltransferase family. RsmA subfamily.

The protein resides in the cytoplasm. It catalyses the reaction adenosine(1518)/adenosine(1519) in 16S rRNA + 4 S-adenosyl-L-methionine = N(6)-dimethyladenosine(1518)/N(6)-dimethyladenosine(1519) in 16S rRNA + 4 S-adenosyl-L-homocysteine + 4 H(+). In terms of biological role, specifically dimethylates two adjacent adenosines (A1518 and A1519) in the loop of a conserved hairpin near the 3'-end of 16S rRNA in the 30S particle. May play a critical role in biogenesis of 30S subunits. This is Ribosomal RNA small subunit methyltransferase A from Nitrosomonas eutropha (strain DSM 101675 / C91 / Nm57).